Reading from the N-terminus, the 354-residue chain is Arginase-2, mitochondrial (354 aa).

Residues 1 to 22 (MFLRSSASRLLHGQIPCVLTRS) constitute a mitochondrion transit peptide. Residues H120, D143, H145, and D147 each contribute to the Mn(2+) site. Substrate is bound by residues 145-149 (HADIN), 156-158 (SGN), and E202. 2 residues coordinate Mn(2+): D251 and D253. T265 and E296 together coordinate substrate.

It belongs to the arginase family. As to quaternary structure, homotrimer. It depends on Mn(2+) as a cofactor.

Its subcellular location is the mitochondrion. It carries out the reaction L-arginine + H2O = urea + L-ornithine. Its pathway is nitrogen metabolism; urea cycle; L-ornithine and urea from L-arginine: step 1/1. Functionally, may play a role in the regulation of extra-urea cycle arginine metabolism and also in down-regulation of nitric oxide synthesis. Extrahepatic arginase functions to regulate L-arginine bioavailability to nitric oxid synthase (NOS). Arginine metabolism is a critical regulator of innate and adaptive immune responses. Seems to be involved in negative regulation of the survival capacity of activated CD4(+) and CD8(+) T cells. May suppress inflammation-related signaling in asthmatic airway epithelium. May contribute to the immune evasion of H.pylori by restricting M1 macrophage activation and polyamine metabolism. May play a role in promoting prenatal immune suppression. Regulates RPS6KB1 signaling, which promotes endothelial cell senescence and inflammation and implicates NOS3/eNOS dysfunction. Can inhibit endothelial autophagy independently of its enzymatic activity implicating mTORC2 signaling. Involved in vascular smooth muscle cell senescence and apoptosis independently of its enzymatic activity. This is Arginase-2, mitochondrial (Arg2) from Mus musculus (Mouse).